Here is a 372-residue protein sequence, read N- to C-terminus: MRSIIADSKRLVVKVGSSLVTNDGRGLDHDAIGRWAAQIAALRGAGKEVVLVSSGAIAEGMQRLGWSKRPREIDELQAAAAVGQMGLAQVYESRFAEHGIRTAQILLTHADLADRERYLNARSTLLTLLRLGVVPIINENDTVVTDEIKFGDNDTLGALVANLIEGDTLVILTDQPGLFTADPRKDPGATLVAEASAGAPELEAMAGGAGSSIGRGGMLTKILAAKRAAHSGANTVIASGRERDVLVRLAAGEAIGTQLIARTARMAARKQWMADHLQVRGHVVIDAGAVDKLTAGGKSLLPIGVVAVQGVFARGEVIACVDDTGREVARGITNYSSAETKLIQRKPSGEIETVLGYMLEPELIHRDNLVLV.

Lysine 14 is an ATP binding site. The substrate site is built by serine 54, aspartate 141, and asparagine 153. ATP is bound at residue 173–174 (TD). The 79-residue stretch at 280-358 (RGHVVIDAGA…GEIETVLGYM (79 aa)) folds into the PUA domain.

The protein belongs to the glutamate 5-kinase family.

It is found in the cytoplasm. It catalyses the reaction L-glutamate + ATP = L-glutamyl 5-phosphate + ADP. Its pathway is amino-acid biosynthesis; L-proline biosynthesis; L-glutamate 5-semialdehyde from L-glutamate: step 1/2. Functionally, catalyzes the transfer of a phosphate group to glutamate to form L-glutamate 5-phosphate. This Burkholderia mallei (strain NCTC 10229) protein is Glutamate 5-kinase.